The primary structure comprises 221 residues: Sigma non-opioid intracellular receptor 1 (221 aa).

Residues 1–4 (MALW) are Lumenal-facing. Residues 5-27 (RGLRAVLAVAGLAVAVQLLRGWL) form a helical membrane-spanning segment. Residues 28–221 (GSKSYVFNRE…STHLSELGFF (194 aa)) are Cytoplasmic-facing. Positions 96–103 (SLTEYVLL) are important for ligand-binding. The interval 174–221 (FIPSTLGFALADTIFSTQDFLTLFYTVKVYGKALLLETSTHLSELGFF) is C-terminal hydrophobic region.

Belongs to the ERG2 family. As to quaternary structure, homotrimer.

The protein localises to the nucleus inner membrane. Its subcellular location is the nucleus outer membrane. It is found in the nucleus envelope. It localises to the cytoplasmic vesicle. The protein resides in the endoplasmic reticulum membrane. The protein localises to the membrane. In terms of biological role, may function in lipid transport from the endoplasmic reticulum and be involved in a wide array of cellular functions probably through regulation of the biogenesis of lipid microdomains at the plasma membrane. May regulate calcium efflux at the endoplasmic reticulum. In Xenopus tropicalis (Western clawed frog), this protein is Sigma non-opioid intracellular receptor 1 (sigmar1).